A 463-amino-acid polypeptide reads, in one-letter code: tRNA modification GTPase MnmE (463 aa).

3 residues coordinate (6S)-5-formyl-5,6,7,8-tetrahydrofolate: arginine 29, glutamate 91, and arginine 130. The 160-residue stretch at 225 to 384 folds into the TrmE-type G domain; the sequence is GLKVAIVGRP…LETAILEIVQ (160 aa). K(+) is bound at residue asparagine 235. GTP is bound by residues 235-240, 254-260, and 279-282; these read NVGKSS, TDLPGTT, and DTAG. A Mg(2+)-binding site is contributed by serine 239. Residues threonine 254, leucine 256, and threonine 259 each coordinate K(+). A Mg(2+)-binding site is contributed by threonine 260. Lysine 463 contributes to the (6S)-5-formyl-5,6,7,8-tetrahydrofolate binding site.

This sequence belongs to the TRAFAC class TrmE-Era-EngA-EngB-Septin-like GTPase superfamily. TrmE GTPase family. Homodimer. Heterotetramer of two MnmE and two MnmG subunits. K(+) is required as a cofactor.

It is found in the cytoplasm. Functionally, exhibits a very high intrinsic GTPase hydrolysis rate. Involved in the addition of a carboxymethylaminomethyl (cmnm) group at the wobble position (U34) of certain tRNAs, forming tRNA-cmnm(5)s(2)U34. This Trichormus variabilis (strain ATCC 29413 / PCC 7937) (Anabaena variabilis) protein is tRNA modification GTPase MnmE.